Here is a 516-residue protein sequence, read N- to C-terminus: Oxysterol-binding protein-like protein 1 (516 aa).

Disordered stretches follow at residues 168–240 (PLGK…SQKS) and 459–501 (KQEI…EEGK). Residues 178–187 (SRTTSSQSVA) show a composition bias toward polar residues. Ser182 carries the phosphoserine modification. Residues 197 to 206 (TSKKKSSKKN) are compositionally biased toward basic residues. Residues 218 to 238 (DRSSTAPSTAESNNEHLSSSQ) show a composition bias toward polar residues.

This sequence belongs to the OSBP family.

The protein resides in the endoplasmic reticulum. This Schizosaccharomyces pombe (strain 972 / ATCC 24843) (Fission yeast) protein is Oxysterol-binding protein-like protein 1 (obp1).